The following is a 214-amino-acid chain: Insulin-like growth factor 2 (214 aa).

The segment at E48–T79 is b. 3 disulfides stabilise this stretch: C56–C97, C68–C110, and C96–C101. A c region spans residues S80–R90. The a stretch occupies residues G91–A111. Residues K112 to E117 are d. The propeptide at R118 to N214 is e peptide.

Belongs to the insulin family.

Its subcellular location is the secreted. The insulin-like growth factors, isolated from plasma, are structurally and functionally related to insulin but have a much higher growth-promoting activity. Acts as a ligand for integrin which is required for IGF2 signaling. The chain is Insulin-like growth factor 2 from Oncorhynchus mykiss (Rainbow trout).